The sequence spans 702 residues: Ribosomal RNA large subunit methyltransferase K/L (702 aa).

Residues 43–154 (LIYQSLMWSR…KETASIALDL (112 aa)) form the THUMP domain.

This sequence belongs to the methyltransferase superfamily. RlmKL family.

Its subcellular location is the cytoplasm. The enzyme catalyses guanosine(2445) in 23S rRNA + S-adenosyl-L-methionine = N(2)-methylguanosine(2445) in 23S rRNA + S-adenosyl-L-homocysteine + H(+). The catalysed reaction is guanosine(2069) in 23S rRNA + S-adenosyl-L-methionine = N(2)-methylguanosine(2069) in 23S rRNA + S-adenosyl-L-homocysteine + H(+). Its function is as follows. Specifically methylates the guanine in position 2445 (m2G2445) and the guanine in position 2069 (m7G2069) of 23S rRNA. In Salmonella arizonae (strain ATCC BAA-731 / CDC346-86 / RSK2980), this protein is Ribosomal RNA large subunit methyltransferase K/L.